A 340-amino-acid chain; its full sequence is Heat-inducible transcription repressor HrcA (340 aa).

The protein belongs to the HrcA family.

In terms of biological role, negative regulator of class I heat shock genes (grpE-dnaK-dnaJ and groELS operons). Prevents heat-shock induction of these operons. This Mycoplasmopsis synoviae (strain 53) (Mycoplasma synoviae) protein is Heat-inducible transcription repressor HrcA.